A 381-amino-acid chain; its full sequence is Acetylornithine deacetylase (381 aa).

Residue H79 participates in Zn(2+) binding. D81 is an active-site residue. Position 111 (D111) interacts with Zn(2+). E143 is an active-site residue. Residues E144, E168, and H354 each contribute to the Zn(2+) site.

Belongs to the peptidase M20A family. ArgE subfamily. As to quaternary structure, homodimer. The cofactor is Zn(2+). It depends on Co(2+) as a cofactor. Requires glutathione as cofactor.

Its subcellular location is the cytoplasm. The catalysed reaction is N(2)-acetyl-L-ornithine + H2O = L-ornithine + acetate. Its pathway is amino-acid biosynthesis; L-arginine biosynthesis; L-ornithine from N(2)-acetyl-L-ornithine (linear): step 1/1. Its function is as follows. Catalyzes the hydrolysis of the amide bond of N(2)-acetylated L-amino acids. Cleaves the acetyl group from N-acetyl-L-ornithine to form L-ornithine, an intermediate in L-arginine biosynthesis pathway, and a branchpoint in the synthesis of polyamines. This chain is Acetylornithine deacetylase, found in Buchnera aphidicola subsp. Schizaphis graminum (strain Sg).